The primary structure comprises 364 residues: Histidinol-phosphate aminotransferase (364 aa).

Residues 1–46 are disordered; the sequence is MQPRDLSDHSPYVPGRGVEEVARDRGLDPDDLIKLSSNENPHGPSP. Positions 17–33 are enriched in basic and acidic residues; it reads GVEEVARDRGLDPDDLI. Lys-222 carries the N6-(pyridoxal phosphate)lysine modification.

This sequence belongs to the class-II pyridoxal-phosphate-dependent aminotransferase family. Histidinol-phosphate aminotransferase subfamily. Pyridoxal 5'-phosphate is required as a cofactor.

It catalyses the reaction L-histidinol phosphate + 2-oxoglutarate = 3-(imidazol-4-yl)-2-oxopropyl phosphate + L-glutamate. It functions in the pathway amino-acid biosynthesis; L-histidine biosynthesis; L-histidine from 5-phospho-alpha-D-ribose 1-diphosphate: step 7/9. This chain is Histidinol-phosphate aminotransferase, found in Halorubrum lacusprofundi (strain ATCC 49239 / DSM 5036 / JCM 8891 / ACAM 34).